The chain runs to 95 residues: Cytosolic calcium-binding protein 3 (95 aa).

Tandem repeats lie at residues 30–35 (VEDAEK), 39–43 (DEEEK), 54–59 (VEEEKK), 67–71 (PEEKK), 75–79 (LEEKQ), and 90–94 (VEKAK). A 6 X 5 AA approximate repeats of V-E-E-K-K region spans residues 30–94 (VEDAEKTNED…AEEVAVEKAK (65 aa)). The interval 54 to 95 (VEEEKKAEEVTETPEEKKTEALEEKQTEVAAAEEVAVEKAKE) is disordered. Residues 55–80 (EEEKKAEEVTETPEEKKTEALEEKQT) are compositionally biased toward basic and acidic residues.

Low levels in roots (e.g. in cambium) and barely expressed in stems, shoots, flowers, siliques and leaves.

The protein localises to the cytoplasm. The protein resides in the cytosol. Its function is as follows. Binds calcium Ca(2+) and may act as a signal mediator to buffer Ca(2+). This is Cytosolic calcium-binding protein 3 from Arabidopsis thaliana (Mouse-ear cress).